We begin with the raw amino-acid sequence, 222 residues long: Phosphoenolpyruvate guanylyltransferase (222 aa).

Phosphoenolpyruvate contacts are provided by Thr-134, Gly-150, and Ser-153.

It belongs to the CofC family.

The catalysed reaction is phosphoenolpyruvate + GTP + H(+) = enolpyruvoyl-2-diphospho-5'-guanosine + diphosphate. It functions in the pathway cofactor biosynthesis; coenzyme F420 biosynthesis. In terms of biological role, guanylyltransferase that catalyzes the activation of phosphoenolpyruvate (PEP) as enolpyruvoyl-2-diphospho-5'-guanosine, via the condensation of PEP with GTP. It is involved in the biosynthesis of coenzyme F420, a hydride carrier cofactor. The chain is Phosphoenolpyruvate guanylyltransferase from Roseiflexus sp. (strain RS-1).